Here is a 373-residue protein sequence, read N- to C-terminus: Phosphoserine aminotransferase (373 aa).

Arg-46 contributes to the L-glutamate binding site. Positions 104, 150, 172, and 195 each coordinate pyridoxal 5'-phosphate. Lys-196 carries the post-translational modification N6-(pyridoxal phosphate)lysine. 247–248 (NT) is a pyridoxal 5'-phosphate binding site.

This sequence belongs to the class-V pyridoxal-phosphate-dependent aminotransferase family. SerC subfamily. Homodimer. Requires pyridoxal 5'-phosphate as cofactor.

It localises to the cytoplasm. It carries out the reaction O-phospho-L-serine + 2-oxoglutarate = 3-phosphooxypyruvate + L-glutamate. It catalyses the reaction 4-(phosphooxy)-L-threonine + 2-oxoglutarate = (R)-3-hydroxy-2-oxo-4-phosphooxybutanoate + L-glutamate. It participates in amino-acid biosynthesis; L-serine biosynthesis; L-serine from 3-phospho-D-glycerate: step 2/3. Its pathway is cofactor biosynthesis; pyridoxine 5'-phosphate biosynthesis; pyridoxine 5'-phosphate from D-erythrose 4-phosphate: step 3/5. Catalyzes the reversible conversion of 3-phosphohydroxypyruvate to phosphoserine and of 3-hydroxy-2-oxo-4-phosphonooxybutanoate to phosphohydroxythreonine. This is Phosphoserine aminotransferase from Rhodococcus jostii (strain RHA1).